The following is a 1248-amino-acid chain: von Willebrand factor A domain-containing protein 5B2 (1248 aa).

The 138-residue stretch at 1 to 138 folds into the VIT domain; sequence MPGLYCPTSW…TMTVTLCSSR (138 aa). The segment at 184–204 is disordered; the sequence is VGSPEEERPTWEQPTATPDVF. Residues 354–527 enclose the VWFA domain; sequence ELLFLLDGSG…KALEPALSDI (174 aa). Disordered stretches follow at residues 590 to 650, 672 to 710, 751 to 789, 1008 to 1037, and 1126 to 1168; these read PEEV…SSDT, SASP…QQGC, ALAG…EPGQ, SKSA…RLSL, and DSAT…SSDL. A compositionally biased stretch (polar residues) spans 595–619; the sequence is SATSPGTEPTHTTEPLGTGTVSAEL. Composition is skewed to low complexity over residues 684–701, 751–764, and 780–789; these read SSES…GSRP, ALAG…SGRA, and PDGLGPEPGQ. Low complexity predominate over residues 1127–1145; that stretch reads SATASCSQSPSSGSEGPGQ. Residues 1159–1168 show a composition bias toward basic and acidic residues; sequence GMERQDSSDL.

This Mus musculus (Mouse) protein is von Willebrand factor A domain-containing protein 5B2 (Vwa5b2).